We begin with the raw amino-acid sequence, 990 residues long: Type III restriction-modification enzyme StyLTI Res subunit (990 aa).

The tract at residues Asn-50–Gly-545 is helicase-like domain. Residues Leu-884–Glu-970 form the VRR-NUC domain. The tract at residues Ser-913–Lys-937 is endonuclease domain.

It belongs to the type III restriction-modification system Res protein family. As to quaternary structure, contains two different subunits: Res and Mod. The cofactor is Mg(2+). S-adenosyl-L-methionine is required as a cofactor.

The enzyme catalyses Endonucleolytic cleavage of DNA to give specific double-stranded fragments with terminal 5'-phosphates.. In terms of biological role, a type III restriction enzyme that recognizes 2 inversely oriented double-stranded sequences 5'-CAGAG-3' and cleaves DNA 25-27 base pairs downstream. After binding to one recognition site undergoes random one-dimensional diffusion along DNA until it collides with a stationary enzyme bound to the second DNA site, which is when DNA cleavage occurs. DNA restriction requires both the Res and Mod subunits. This is Type III restriction-modification enzyme StyLTI Res subunit from Salmonella typhimurium (strain LT2 / SGSC1412 / ATCC 700720).